Here is a 1149-residue protein sequence, read N- to C-terminus: ATP-dependent helicase/deoxyribonuclease subunit B (1149 aa).

ATP is bound at residue 8–15 (GRAGSGKS). Residues cysteine 788, cysteine 1106, cysteine 1109, and cysteine 1115 each coordinate [4Fe-4S] cluster.

It belongs to the helicase family. AddB/RexB type 1 subfamily. As to quaternary structure, heterodimer of AddA and AddB. It depends on Mg(2+) as a cofactor. [4Fe-4S] cluster serves as cofactor.

Its function is as follows. The heterodimer acts as both an ATP-dependent DNA helicase and an ATP-dependent, dual-direction single-stranded exonuclease. Recognizes the chi site generating a DNA molecule suitable for the initiation of homologous recombination. The AddB subunit has 5' -&gt; 3' nuclease activity but not helicase activity. In Ruminiclostridium cellulolyticum (strain ATCC 35319 / DSM 5812 / JCM 6584 / H10) (Clostridium cellulolyticum), this protein is ATP-dependent helicase/deoxyribonuclease subunit B.